Here is a 101-residue protein sequence, read N- to C-terminus: UPF0060 membrane protein ACIAD1364 (101 aa).

3 helical membrane passes run 24 to 44, 50 to 70, and 79 to 99; these read WLWL…TLHP, IYAA…RFID, and IWGG…PQGL.

The protein belongs to the UPF0060 family.

It is found in the cell inner membrane. The sequence is that of UPF0060 membrane protein ACIAD1364 from Acinetobacter baylyi (strain ATCC 33305 / BD413 / ADP1).